The primary structure comprises 129 residues: Large ribosomal subunit protein bL20 (129 aa).

It belongs to the bacterial ribosomal protein bL20 family.

Its function is as follows. Binds directly to 23S ribosomal RNA and is necessary for the in vitro assembly process of the 50S ribosomal subunit. It is not involved in the protein synthesizing functions of that subunit. The sequence is that of Large ribosomal subunit protein bL20 from Mycolicibacterium gilvum (strain PYR-GCK) (Mycobacterium gilvum (strain PYR-GCK)).